Consider the following 601-residue polypeptide: Threonine dehydratase (601 aa).

A chloroplast-targeting transit peptide spans 1 to 51 (MEVLCQAPAGNSNFACNPKFTAIRTRAISSNDTFKVISSTGNNKKMKGAIR). 2 consecutive ACT-like domains span residues 427–499 (ALLA…NLTN) and 521–592 (IFCQ…IESL).

This sequence belongs to the serine/threonine dehydratase family. It depends on pyridoxal 5'-phosphate as a cofactor.

The protein resides in the plastid. It is found in the chloroplast. It carries out the reaction L-threonine = 2-oxobutanoate + NH4(+). Its pathway is amino-acid biosynthesis; L-isoleucine biosynthesis; 2-oxobutanoate from L-threonine: step 1/1. Functionally, catalyzes the conversion of threonine to alpha-keto butyrate in isoleucine (Ile) biosynthesis. Required for JA-Ile biosynthesis, a signaling molecule involved in defense and resistance to the herbivore Manduca sexta caterpillars. In Nicotiana attenuata (Coyote tobacco), this protein is Threonine dehydratase.